A 485-amino-acid polypeptide reads, in one-letter code: Glutamyl-tRNA(Gln) amidotransferase subunit A (485 aa).

Active-site charge relay system residues include Lys78 and Ser153. Ser177 acts as the Acyl-ester intermediate in catalysis.

The protein belongs to the amidase family. GatA subfamily. As to quaternary structure, heterotrimer of A, B and C subunits.

The catalysed reaction is L-glutamyl-tRNA(Gln) + L-glutamine + ATP + H2O = L-glutaminyl-tRNA(Gln) + L-glutamate + ADP + phosphate + H(+). Allows the formation of correctly charged Gln-tRNA(Gln) through the transamidation of misacylated Glu-tRNA(Gln) in organisms which lack glutaminyl-tRNA synthetase. The reaction takes place in the presence of glutamine and ATP through an activated gamma-phospho-Glu-tRNA(Gln). This Geobacter sp. (strain M21) protein is Glutamyl-tRNA(Gln) amidotransferase subunit A.